The primary structure comprises 150 residues: Avidin-related protein 2 (150 aa).

The signal sequence occupies residues Met-1–Ser-24. Residues Arg-26 to Thr-147 form the Avidin-like domain. A disulfide bridge connects residues Cys-28 and Cys-105. Residues Asn-36, Ser-40, Tyr-57, Thr-59, and Asp-63 each coordinate biotin. Asn-67 and Asn-93 each carry an N-linked (GlcNAc...) asparagine glycan. 3 residues coordinate biotin: Ser-95, Ser-99, and Asn-140.

In terms of assembly, homotetramer. Glycosylated.

It is found in the secreted. Its function is as follows. Forms a strong non-covalent specific complex with biotin. In Gallus gallus (Chicken), this protein is Avidin-related protein 2 (AVR2).